The sequence spans 725 residues: Methionine--tRNA ligase (725 aa).

Residues 27–37 (PYANGQIHIGH) carry the 'HIGH' region motif. Zn(2+) is bound by residues Cys158, Cys161, Cys171, and Cys174. The short motif at 348 to 352 (KMSKS) is the 'KMSKS' region element. Lys351 serves as a coordination point for ATP. Residues 619-725 (DFAKIDLRIA…SGAKPGMRVK (107 aa)) form the tRNA-binding domain.

It belongs to the class-I aminoacyl-tRNA synthetase family. MetG type 1 subfamily. Homodimer. It depends on Zn(2+) as a cofactor.

It is found in the cytoplasm. It carries out the reaction tRNA(Met) + L-methionine + ATP = L-methionyl-tRNA(Met) + AMP + diphosphate. In terms of biological role, is required not only for elongation of protein synthesis but also for the initiation of all mRNA translation through initiator tRNA(fMet) aminoacylation. The chain is Methionine--tRNA ligase from Burkholderia mallei (strain NCTC 10247).